The sequence spans 414 residues: Imidazolonepropionase (414 aa).

2 residues coordinate Fe(3+): histidine 77 and histidine 79. Positions 77 and 79 each coordinate Zn(2+). 4-imidazolone-5-propanoate contacts are provided by arginine 86, tyrosine 149, and histidine 184. Tyrosine 149 contributes to the N-formimidoyl-L-glutamate binding site. Position 249 (histidine 249) interacts with Fe(3+). Residue histidine 249 participates in Zn(2+) binding. Residue glutamate 252 participates in 4-imidazolone-5-propanoate binding. Aspartate 323 contributes to the Fe(3+) binding site. Aspartate 323 contacts Zn(2+). 2 residues coordinate N-formimidoyl-L-glutamate: asparagine 325 and glycine 327. Serine 328 contributes to the 4-imidazolone-5-propanoate binding site.

The protein belongs to the metallo-dependent hydrolases superfamily. HutI family. Requires Zn(2+) as cofactor. The cofactor is Fe(3+).

It is found in the cytoplasm. The enzyme catalyses 4-imidazolone-5-propanoate + H2O = N-formimidoyl-L-glutamate. It participates in amino-acid degradation; L-histidine degradation into L-glutamate; N-formimidoyl-L-glutamate from L-histidine: step 3/3. Functionally, catalyzes the hydrolytic cleavage of the carbon-nitrogen bond in imidazolone-5-propanoate to yield N-formimidoyl-L-glutamate. It is the third step in the universal histidine degradation pathway. In Phocaeicola vulgatus (strain ATCC 8482 / DSM 1447 / JCM 5826 / CCUG 4940 / NBRC 14291 / NCTC 11154) (Bacteroides vulgatus), this protein is Imidazolonepropionase.